Consider the following 256-residue polypeptide: Imidazole glycerol phosphate synthase subunit HisF (256 aa).

Residues Asp-11 and Asp-130 contribute to the active site.

It belongs to the HisA/HisF family. As to quaternary structure, heterodimer of HisH and HisF.

It is found in the cytoplasm. The enzyme catalyses 5-[(5-phospho-1-deoxy-D-ribulos-1-ylimino)methylamino]-1-(5-phospho-beta-D-ribosyl)imidazole-4-carboxamide + L-glutamine = D-erythro-1-(imidazol-4-yl)glycerol 3-phosphate + 5-amino-1-(5-phospho-beta-D-ribosyl)imidazole-4-carboxamide + L-glutamate + H(+). Its pathway is amino-acid biosynthesis; L-histidine biosynthesis; L-histidine from 5-phospho-alpha-D-ribose 1-diphosphate: step 5/9. In terms of biological role, IGPS catalyzes the conversion of PRFAR and glutamine to IGP, AICAR and glutamate. The HisF subunit catalyzes the cyclization activity that produces IGP and AICAR from PRFAR using the ammonia provided by the HisH subunit. In Synechococcus sp. (strain CC9605), this protein is Imidazole glycerol phosphate synthase subunit HisF.